The chain runs to 148 residues: ASCH domain-containing ribonuclease (148 aa).

Positions 13–70 (SLWPEFAKAIVSGKKTVEFRRRIPLPALSARIWIYATRPVKSVIGFAYLEAIVQGDVN) constitute an ASCH domain.

Mn(2+) serves as cofactor. Requires Ni(2+) as cofactor.

Its function is as follows. Shows sequence-specific endoribonuclease activity towards single-stranded RNA (ssRNA), with a preference for the bond between pyrimidine and adenine nucleotides. May also have 5'-exonuclease activity. The protein is ASCH domain-containing ribonuclease of Zymomonas mobilis subsp. mobilis (strain ATCC 10988 / DSM 424 / LMG 404 / NCIMB 8938 / NRRL B-806 / ZM1).